The following is a 475-amino-acid chain: Aspartyl/glutamyl-tRNA(Asn/Gln) amidotransferase subunit B (475 aa).

It belongs to the GatB/GatE family. GatB subfamily. As to quaternary structure, heterotrimer of A, B and C subunits.

The enzyme catalyses L-glutamyl-tRNA(Gln) + L-glutamine + ATP + H2O = L-glutaminyl-tRNA(Gln) + L-glutamate + ADP + phosphate + H(+). The catalysed reaction is L-aspartyl-tRNA(Asn) + L-glutamine + ATP + H2O = L-asparaginyl-tRNA(Asn) + L-glutamate + ADP + phosphate + 2 H(+). Allows the formation of correctly charged Asn-tRNA(Asn) or Gln-tRNA(Gln) through the transamidation of misacylated Asp-tRNA(Asn) or Glu-tRNA(Gln) in organisms which lack either or both of asparaginyl-tRNA or glutaminyl-tRNA synthetases. The reaction takes place in the presence of glutamine and ATP through an activated phospho-Asp-tRNA(Asn) or phospho-Glu-tRNA(Gln). The sequence is that of Aspartyl/glutamyl-tRNA(Asn/Gln) amidotransferase subunit B from Staphylococcus aureus (strain COL).